Consider the following 388-residue polypeptide: uncharacterized protein (388 aa).

Residues lysine 68–threonine 96 are a coiled coil. Positions glycine 162–valine 388 are disordered. Basic and acidic residues-rich tracts occupy residues leucine 166 to proline 176 and alanine 196 to lysine 208. A compositionally biased stretch (basic residues) spans glycine 233–arginine 251. Composition is skewed to low complexity over residues glutamine 265–glutamine 279 and glutamine 293–alanine 346.

This is an uncharacterized protein from Frog virus 3 (isolate Goorha) (FV-3).